A 400-amino-acid chain; its full sequence is Phosphoglycerate kinase (400 aa).

Substrate contacts are provided by residues 24–26 (DFN), Arg-39, 62–65 (HFGR), Arg-121, and Arg-154. ATP is bound by residues Lys-205, Gly-296, Glu-327, and 356–359 (GGDS).

It belongs to the phosphoglycerate kinase family. Monomer.

The protein localises to the cytoplasm. The enzyme catalyses (2R)-3-phosphoglycerate + ATP = (2R)-3-phospho-glyceroyl phosphate + ADP. It participates in carbohydrate degradation; glycolysis; pyruvate from D-glyceraldehyde 3-phosphate: step 2/5. The polypeptide is Phosphoglycerate kinase (Rippkaea orientalis (strain PCC 8801 / RF-1) (Cyanothece sp. (strain PCC 8801))).